The sequence spans 172 residues: 3-hydroxydecanoyl-[acyl-carrier-protein] dehydratase (172 aa).

His-71 is an active-site residue.

The protein belongs to the thioester dehydratase family. FabA subfamily. Homodimer.

It is found in the cytoplasm. The enzyme catalyses a (3R)-hydroxyacyl-[ACP] = a (2E)-enoyl-[ACP] + H2O. It carries out the reaction (3R)-hydroxydecanoyl-[ACP] = (2E)-decenoyl-[ACP] + H2O. The catalysed reaction is (2E)-decenoyl-[ACP] = (3Z)-decenoyl-[ACP]. The protein operates within lipid metabolism; fatty acid biosynthesis. Functionally, necessary for the introduction of cis unsaturation into fatty acids. Catalyzes the dehydration of (3R)-3-hydroxydecanoyl-ACP to E-(2)-decenoyl-ACP and then its isomerization to Z-(3)-decenoyl-ACP. Can catalyze the dehydratase reaction for beta-hydroxyacyl-ACPs with saturated chain lengths up to 16:0, being most active on intermediate chain length. This chain is 3-hydroxydecanoyl-[acyl-carrier-protein] dehydratase, found in Serratia proteamaculans (strain 568).